The chain runs to 482 residues: Catalase (482 aa).

Residues 1–23 are compositionally biased toward polar residues; it reads MSQNKTLTTASGPPVADNQNSRS. Residues 1 to 28 are disordered; sequence MSQNKTLTTASGPPVADNQNSRSAGPRG. Active-site residues include H55 and N128. Y338 contributes to the heme binding site. The segment at 370-395 is disordered; sequence SMAFGSNGGAAPNYEPNSYADAPKQA.

This sequence belongs to the catalase family. It depends on heme as a cofactor.

The enzyme catalyses 2 H2O2 = O2 + 2 H2O. Decomposes hydrogen peroxide into water and oxygen; serves to protect cells from the toxic effects of hydrogen peroxide. The sequence is that of Catalase (cat) from Onchocerca volvulus endobacterium.